The primary structure comprises 202 residues: Large ribosomal subunit protein uL4 (202 aa).

Residues 40–71 are disordered; that stretch reads GRQGSKAQKTRSQVSGGGKKPWRQKGSGRARA. Residues 44–53 show a composition bias toward polar residues; the sequence is SKAQKTRSQV.

This sequence belongs to the universal ribosomal protein uL4 family. As to quaternary structure, part of the 50S ribosomal subunit.

One of the primary rRNA binding proteins, this protein initially binds near the 5'-end of the 23S rRNA. It is important during the early stages of 50S assembly. It makes multiple contacts with different domains of the 23S rRNA in the assembled 50S subunit and ribosome. In terms of biological role, forms part of the polypeptide exit tunnel. In Hahella chejuensis (strain KCTC 2396), this protein is Large ribosomal subunit protein uL4.